Reading from the N-terminus, the 56-residue chain is Large ribosomal subunit protein eL40 (56 aa).

It belongs to the eukaryotic ribosomal protein eL40 family.

In Sulfurisphaera tokodaii (strain DSM 16993 / JCM 10545 / NBRC 100140 / 7) (Sulfolobus tokodaii), this protein is Large ribosomal subunit protein eL40.